Reading from the N-terminus, the 311-residue chain is Aspartate carbamoyltransferase catalytic subunit (311 aa).

The carbamoyl phosphate site is built by arginine 58 and threonine 59. Lysine 86 is an L-aspartate binding site. Residues arginine 108, histidine 136, and glutamine 139 each contribute to the carbamoyl phosphate site. The L-aspartate site is built by arginine 169 and arginine 224. Carbamoyl phosphate contacts are provided by glycine 265 and proline 266.

Belongs to the aspartate/ornithine carbamoyltransferase superfamily. ATCase family. In terms of assembly, heterododecamer (2C3:3R2) of six catalytic PyrB chains organized as two trimers (C3), and six regulatory PyrI chains organized as three dimers (R2).

The enzyme catalyses carbamoyl phosphate + L-aspartate = N-carbamoyl-L-aspartate + phosphate + H(+). It participates in pyrimidine metabolism; UMP biosynthesis via de novo pathway; (S)-dihydroorotate from bicarbonate: step 2/3. Functionally, catalyzes the condensation of carbamoyl phosphate and aspartate to form carbamoyl aspartate and inorganic phosphate, the committed step in the de novo pyrimidine nucleotide biosynthesis pathway. The protein is Aspartate carbamoyltransferase catalytic subunit of Geobacter sulfurreducens (strain ATCC 51573 / DSM 12127 / PCA).